Consider the following 27-residue polypeptide: Palustrin-1d (27 aa).

Cysteines 21 and 27 form a disulfide.

Expressed by the skin glands.

Its subcellular location is the secreted. Its function is as follows. Antimicrobial activity against Gram-negative bacterium E.coli. The chain is Palustrin-1d from Lithobates palustris (Pickerel frog).